The chain runs to 256 residues: Trypsin epsilon (256 aa).

A signal peptide spans 1–22; the sequence is MLKIAVLLSVLACALAGTIPDG. Residues 23–30 constitute a propeptide, activation peptide; the sequence is LLPQLDGR. The region spanning 31-254 is the Peptidase S1 domain; sequence IVGGYETSID…FHEWIERTAR (224 aa). A disulfide bond links cysteine 56 and cysteine 72. Active-site charge relay system residues include histidine 71 and aspartate 116. Intrachain disulfides connect cysteine 180–cysteine 197 and cysteine 206–cysteine 230. Residue serine 210 is the Charge relay system of the active site.

It belongs to the peptidase S1 family.

Its subcellular location is the secreted. The protein localises to the extracellular space. It carries out the reaction Preferential cleavage: Arg-|-Xaa, Lys-|-Xaa.. In Drosophila erecta (Fruit fly), this protein is Trypsin epsilon (epsilonTry).